The following is an 864-amino-acid chain: Leucine--tRNA ligase (864 aa).

A 'HIGH' region motif is present at residues 42–52 (PYPSGKLHMGH). The 'KMSKS' region signature appears at 624–628 (KMSKS). An ATP-binding site is contributed by Lys-627.

This sequence belongs to the class-I aminoacyl-tRNA synthetase family.

It localises to the cytoplasm. The catalysed reaction is tRNA(Leu) + L-leucine + ATP = L-leucyl-tRNA(Leu) + AMP + diphosphate. The sequence is that of Leucine--tRNA ligase from Burkholderia ambifaria (strain MC40-6).